Reading from the N-terminus, the 334-residue chain is Ferredoxin--NADP reductase (334 aa).

Residues D33, Q41, Y46, A86, F120, D286, and T327 each contribute to the FAD site.

Belongs to the ferredoxin--NADP reductase type 2 family. In terms of assembly, homodimer. It depends on FAD as a cofactor.

The catalysed reaction is 2 reduced [2Fe-2S]-[ferredoxin] + NADP(+) + H(+) = 2 oxidized [2Fe-2S]-[ferredoxin] + NADPH. The sequence is that of Ferredoxin--NADP reductase from Rickettsia massiliae (strain Mtu5).